A 330-amino-acid chain; its full sequence is Ketol-acid reductoisomerase (NADP(+)) (330 aa).

In terms of domain architecture, KARI N-terminal Rossmann spans 3–184 (LPVYYDKDID…GGGRMGVLET (182 aa)). NADP(+) is bound by residues 26 to 29 (YGAQ), Ser52, and Ser54. Residue His109 is part of the active site. Gly135 is a binding site for NADP(+). One can recognise a KARI C-terminal knotted domain in the interval 185 to 329 (SFKEECESDL…EILRAPFNHK (145 aa)). Mg(2+)-binding residues include Asp193, Glu197, Glu229, and Glu233. Ser254 provides a ligand contact to substrate.

It belongs to the ketol-acid reductoisomerase family. The cofactor is Mg(2+).

It catalyses the reaction (2R)-2,3-dihydroxy-3-methylbutanoate + NADP(+) = (2S)-2-acetolactate + NADPH + H(+). The catalysed reaction is (2R,3R)-2,3-dihydroxy-3-methylpentanoate + NADP(+) = (S)-2-ethyl-2-hydroxy-3-oxobutanoate + NADPH + H(+). Its pathway is amino-acid biosynthesis; L-isoleucine biosynthesis; L-isoleucine from 2-oxobutanoate: step 2/4. It functions in the pathway amino-acid biosynthesis; L-valine biosynthesis; L-valine from pyruvate: step 2/4. In terms of biological role, involved in the biosynthesis of branched-chain amino acids (BCAA). Catalyzes an alkyl-migration followed by a ketol-acid reduction of (S)-2-acetolactate (S2AL) to yield (R)-2,3-dihydroxy-isovalerate. In the isomerase reaction, S2AL is rearranged via a Mg-dependent methyl migration to produce 3-hydroxy-3-methyl-2-ketobutyrate (HMKB). In the reductase reaction, this 2-ketoacid undergoes a metal-dependent reduction by NADPH to yield (R)-2,3-dihydroxy-isovalerate. The sequence is that of Ketol-acid reductoisomerase (NADP(+)) from Helicobacter pylori (strain Shi470).